Consider the following 217-residue polypeptide: ATP synthase subunit a (217 aa).

A run of 6 helical transmembrane segments spans residues 5-25 (EHVI…LAAG), 63-83 (LIAS…LPFV), 89-109 (NINT…FEGF), 120-140 (FMGP…MSHL), 157-177 (GAIL…TLAV), and 191-213 (LAIV…GAVV).

This sequence belongs to the ATPase A chain family. As to quaternary structure, F-type ATPases have 2 components, CF(1) - the catalytic core - and CF(0) - the membrane proton channel. CF(1) has five subunits: alpha(3), beta(3), gamma(1), delta(1), epsilon(1). CF(0) has three main subunits: a(1), b(2) and c(9-12). The alpha and beta chains form an alternating ring which encloses part of the gamma chain. CF(1) is attached to CF(0) by a central stalk formed by the gamma and epsilon chains, while a peripheral stalk is formed by the delta and b chains.

It localises to the cell inner membrane. Key component of the proton channel; it plays a direct role in the translocation of protons across the membrane. The chain is ATP synthase subunit a from Hydrogenobaculum sp. (strain Y04AAS1).